Consider the following 85-residue polypeptide: Translation initiation factor IF-1 2 (85 aa).

The region spanning 1–72 (MAKEELIEMQ…TKGRITFRHL (72 aa)) is the S1-like domain.

This sequence belongs to the IF-1 family. As to quaternary structure, component of the 30S ribosomal translation pre-initiation complex which assembles on the 30S ribosome in the order IF-2 and IF-3, IF-1 and N-formylmethionyl-tRNA(fMet); mRNA recruitment can occur at any time during PIC assembly.

The protein resides in the cytoplasm. Its function is as follows. One of the essential components for the initiation of protein synthesis. Stabilizes the binding of IF-2 and IF-3 on the 30S subunit to which N-formylmethionyl-tRNA(fMet) subsequently binds. Helps modulate mRNA selection, yielding the 30S pre-initiation complex (PIC). Upon addition of the 50S ribosomal subunit IF-1, IF-2 and IF-3 are released leaving the mature 70S translation initiation complex. This Paracidovorax citrulli (strain AAC00-1) (Acidovorax citrulli) protein is Translation initiation factor IF-1 2.